The sequence spans 503 residues: MFGDRQRPMVLVLGLGESGLAIARWCARHGCRLRIADTREAPPNLAALRAEGIDAEFVGGPFGPALLDGGVEIVGLSPGLSPLEPALATLLAAANERGVAVWGELEFFAQALRALGTSGYQPKVLAITGTNGKTTTTSLTGLLCQRAGKKVAVAGNISPAMLDRLAAAIDDTALPDVWVLELSSFQLETARTFAPDAAAILNITQDHLDWHGSFDAYAAAKGRIFGATTTRVLNRDDPVVMKFAPAAGAADAPRTITFGLNEPTQDGDYGLSRDNGIAWLVEAIDRDAPDETAPTTRRRKRDAHTPDIAHKRLMPADALRIRGLHNAANALAAFALARAIDLPAAPLLHALREYRGEAHRVEVIATIDDVDYVDDSKGTNVGATVAALDGLAQKTVLIAGGDGKGQDFAPLVAPVARWCRAVMLIGRDAPAIRDTLAETGVPLVEHPTLEAAVHAAAALAEPGDAVLLSPACASLDMFRNYAHRADVFRAAVDELAIDKGATP.

Position 129 to 135 (129 to 135) interacts with ATP; that stretch reads GTNGKTT.

It belongs to the MurCDEF family.

Its subcellular location is the cytoplasm. It catalyses the reaction UDP-N-acetyl-alpha-D-muramoyl-L-alanine + D-glutamate + ATP = UDP-N-acetyl-alpha-D-muramoyl-L-alanyl-D-glutamate + ADP + phosphate + H(+). The protein operates within cell wall biogenesis; peptidoglycan biosynthesis. In terms of biological role, cell wall formation. Catalyzes the addition of glutamate to the nucleotide precursor UDP-N-acetylmuramoyl-L-alanine (UMA). This Burkholderia multivorans (strain ATCC 17616 / 249) protein is UDP-N-acetylmuramoylalanine--D-glutamate ligase.